Reading from the N-terminus, the 697-residue chain is Hormonally up-regulated neu tumor-associated kinase homolog (697 aa).

The Protein kinase domain maps to 55–313; it reads YLIGRKLGEG…IQQALANRWL (259 aa). ATP-binding positions include 61–69 and K84; that span reads LGEGSFAKV. D179 (proton acceptor) is an active-site residue. 2 stretches are compositionally biased toward basic and acidic residues: residues 405-424 and 460-473; these read KMNK…KRGE and PVKE…ERES. Disordered regions lie at residues 405 to 480 and 586 to 642; these read KMNK…LSPF and DNTS…NCVR. Polar residues predominate over residues 586-600; that stretch reads DNTSPIKGHSNQASF. A compositionally biased stretch (low complexity) spans 607–626; the sequence is SPSSPESMSPTSPHSPHSPS. The span at 627-637 shows a compositional bias: polar residues; sequence CNNNISGNLGS.

This sequence belongs to the protein kinase superfamily. CAMK Ser/Thr protein kinase family. SNF1 subfamily.

It catalyses the reaction L-seryl-[protein] + ATP = O-phospho-L-seryl-[protein] + ADP + H(+). The catalysed reaction is L-threonyl-[protein] + ATP = O-phospho-L-threonyl-[protein] + ADP + H(+). This chain is Hormonally up-regulated neu tumor-associated kinase homolog (hunk), found in Xenopus tropicalis (Western clawed frog).